A 544-amino-acid polypeptide reads, in one-letter code: Membrane protein insertase YidC (544 aa).

The next 5 membrane-spanning stretches (helical) occupy residues 6-26 (NILLIGLLFVSFLLWQQWQTD), 345-365 (LLMFFQSIVGNWGAAIILITL), 423-443 (GGCLPILLQMPIFIALYWVLL), 460-480 (LSVQDPYYVMPILMGVSMFVM), and 503-523 (VVFTVFFLWFPAGLVLYWLVG).

This sequence belongs to the OXA1/ALB3/YidC family. Type 1 subfamily. In terms of assembly, interacts with the Sec translocase complex via SecD. Specifically interacts with transmembrane segments of nascent integral membrane proteins during membrane integration.

The protein localises to the cell inner membrane. Required for the insertion and/or proper folding and/or complex formation of integral membrane proteins into the membrane. Involved in integration of membrane proteins that insert both dependently and independently of the Sec translocase complex, as well as at least some lipoproteins. Aids folding of multispanning membrane proteins. The polypeptide is Membrane protein insertase YidC (Shewanella woodyi (strain ATCC 51908 / MS32)).